A 252-amino-acid chain; its full sequence is 3-deoxy-manno-octulosonate cytidylyltransferase (252 aa).

Belongs to the KdsB family.

It is found in the cytoplasm. The enzyme catalyses 3-deoxy-alpha-D-manno-oct-2-ulosonate + CTP = CMP-3-deoxy-beta-D-manno-octulosonate + diphosphate. Its pathway is nucleotide-sugar biosynthesis; CMP-3-deoxy-D-manno-octulosonate biosynthesis; CMP-3-deoxy-D-manno-octulosonate from 3-deoxy-D-manno-octulosonate and CTP: step 1/1. It participates in bacterial outer membrane biogenesis; lipopolysaccharide biosynthesis. Its function is as follows. Activates KDO (a required 8-carbon sugar) for incorporation into bacterial lipopolysaccharide in Gram-negative bacteria. In Trichlorobacter lovleyi (strain ATCC BAA-1151 / DSM 17278 / SZ) (Geobacter lovleyi), this protein is 3-deoxy-manno-octulosonate cytidylyltransferase.